The chain runs to 340 residues: NADH-quinone oxidoreductase subunit H (340 aa).

Transmembrane regions (helical) follow at residues 3–23 (LVGMVALMVGVLVSVAYLVYM), 69–89 (WAFFAAPVITFALALAGWAVI), 102–122 (VVVMPYVVADLNLGVLYVLAI), 127–147 (VYGIIMAGWASGSNYAFLGAI), 154–174 (ISYEMSMGLVMLSVSLCAGSL), 186–206 (MPYWMDLLLLPMAGVFFVSML), 248–268 (ILVSAMMVVLFLGGWYPPLNI), 274–294 (IPGFVWFCSKVFLLLFCFIWV), and 312–332 (KVFLPFSFVWVMVISGVLLWV).

Belongs to the complex I subunit 1 family. As to quaternary structure, NDH-1 is composed of 14 different subunits. Subunits NuoA, H, J, K, L, M, N constitute the membrane sector of the complex.

The protein resides in the cell inner membrane. It carries out the reaction a quinone + NADH + 5 H(+)(in) = a quinol + NAD(+) + 4 H(+)(out). NDH-1 shuttles electrons from NADH, via FMN and iron-sulfur (Fe-S) centers, to quinones in the respiratory chain. The immediate electron acceptor for the enzyme in this species is believed to be ubiquinone. Couples the redox reaction to proton translocation (for every two electrons transferred, four hydrogen ions are translocated across the cytoplasmic membrane), and thus conserves the redox energy in a proton gradient. This subunit may bind ubiquinone. This is NADH-quinone oxidoreductase subunit H from Anaplasma phagocytophilum (strain HZ).